The chain runs to 915 residues: Alpha-xylosidase 1 (915 aa).

The first 27 residues, 1–27 (MASSSSSLAFSLSLLLALILCFSPTQS), serve as a signal peptide directing secretion. N-linked (GlcNAc...) asparagine glycans are attached at residues N153, N304, and N375. Catalysis depends on residues D440 and E443. N476 and N490 each carry an N-linked (GlcNAc...) asparagine glycan. D563 (proton donor) is an active-site residue. Residues N819, N888, and N907 are each glycosylated (N-linked (GlcNAc...) asparagine).

Belongs to the glycosyl hydrolase 31 family. As to expression, expressed in roots, stems, leaves, flowers and siliques. Expressed in cell types undergoing cell wall modifications, including trichomes, vasculature, stomata, and elongating anther filaments. Not detected in pollen.

Its subcellular location is the secreted. The protein localises to the cell wall. It is found in the extracellular space. The protein resides in the apoplast. It catalyses the reaction Hydrolysis of terminal, non-reducing alpha-D-xylose residues with release of alpha-D-xylose.. Functionally, glycoside hydrolase releasing xylosyl residues from xyloglucan oligosaccharides at the non-reducing end. Has alpha-xylosidase activity against xylan oligosaccharides. Also has alpha-glucosidase activity against p-nitrophenyl-alpha-D-glucopyranoside. No activity against p-nitrophenyl-D-xyloside. The polypeptide is Alpha-xylosidase 1 (Arabidopsis thaliana (Mouse-ear cress)).